We begin with the raw amino-acid sequence, 302 residues long: 2-phosphoglycerate kinase (302 aa).

The region spanning 2 to 89 (IKVIERDGKV…FWRRFRKLKI (88 aa)) is the ATP-cone domain.

Belongs to the 2-phosphoglycerate kinase family. The cofactor is a divalent metal cation.

The catalysed reaction is (2R)-2-phosphoglycerate + ATP = (2R)-2,3-bisphosphoglycerate + ADP + H(+). The protein operates within thermoadapter biosynthesis; cyclic 2,3-diphosphoglycerate biosynthesis; cyclic 2,3-diphosphoglycerate from 2-phospho-D-glycerate: step 1/2. In terms of biological role, catalyzes the phosphorylation of 2-phosphoglycerate to 2,3-diphosphoglycerate. Involved in the biosynthesis of cyclic 2,3-bisphosphoglycerate, a thermoprotectant. This Pyrococcus furiosus (strain ATCC 43587 / DSM 3638 / JCM 8422 / Vc1) protein is 2-phosphoglycerate kinase.